The primary structure comprises 228 residues: Cytochrome c oxidase subunit 2 (228 aa).

Over 1–26 (MATWANLGLQDSSSPLMEQLNFFHDH) the chain is Mitochondrial intermembrane. A helical transmembrane segment spans residues 27 to 48 (TLLILTMITILVGYIMGMLSFN). Residues 49–62 (KFTNRFLLHGQTIE) are Mitochondrial matrix-facing. Residues 63–82 (IIWTVLPAIILMFIAFPSLR) traverse the membrane as a helical segment. The Mitochondrial intermembrane segment spans residues 83 to 228 (LLYLMDEINT…FIKWITSMTN (146 aa)). Cu cation is bound by residues H161, C196, E198, C200, H204, and M207. A Mg(2+)-binding site is contributed by E198.

The protein belongs to the cytochrome c oxidase subunit 2 family. Component of the cytochrome c oxidase (complex IV, CIV), a multisubunit enzyme composed of a catalytic core of 3 subunits and several supernumerary subunits. The complex exists as a monomer or a dimer and forms supercomplexes (SCs) in the inner mitochondrial membrane with ubiquinol-cytochrome c oxidoreductase (cytochrome b-c1 complex, complex III, CIII). It depends on Cu cation as a cofactor.

It localises to the mitochondrion inner membrane. It carries out the reaction 4 Fe(II)-[cytochrome c] + O2 + 8 H(+)(in) = 4 Fe(III)-[cytochrome c] + 2 H2O + 4 H(+)(out). Functionally, component of the cytochrome c oxidase, the last enzyme in the mitochondrial electron transport chain which drives oxidative phosphorylation. The respiratory chain contains 3 multisubunit complexes succinate dehydrogenase (complex II, CII), ubiquinol-cytochrome c oxidoreductase (cytochrome b-c1 complex, complex III, CIII) and cytochrome c oxidase (complex IV, CIV), that cooperate to transfer electrons derived from NADH and succinate to molecular oxygen, creating an electrochemical gradient over the inner membrane that drives transmembrane transport and the ATP synthase. Cytochrome c oxidase is the component of the respiratory chain that catalyzes the reduction of oxygen to water. Electrons originating from reduced cytochrome c in the intermembrane space (IMS) are transferred via the dinuclear copper A center (CU(A)) of subunit 2 and heme A of subunit 1 to the active site in subunit 1, a binuclear center (BNC) formed by heme A3 and copper B (CU(B)). The BNC reduces molecular oxygen to 2 water molecules using 4 electrons from cytochrome c in the IMS and 4 protons from the mitochondrial matrix. This is Cytochrome c oxidase subunit 2 (COII) from Anopheles gambiae (African malaria mosquito).